Reading from the N-terminus, the 121-residue chain is Large ribosomal subunit protein bL12 (121 aa).

It belongs to the bacterial ribosomal protein bL12 family. In terms of assembly, homodimer. Part of the ribosomal stalk of the 50S ribosomal subunit. Forms a multimeric L10(L12)X complex, where L10 forms an elongated spine to which 2 to 4 L12 dimers bind in a sequential fashion. Binds GTP-bound translation factors.

Forms part of the ribosomal stalk which helps the ribosome interact with GTP-bound translation factors. Is thus essential for accurate translation. The polypeptide is Large ribosomal subunit protein bL12 (Pelagibacter ubique (strain HTCC1062)).